A 242-amino-acid chain; its full sequence is MEFDPVKINTSSIDHVTILQYIDEPNDIRLTVCIIRNINNITYYINITKINPHLANRFRAWKKRIAGRDYMTNLSRDTGIQQSKLTETIRNCQKNKNIYGLYIHYNLVINVVIDWITDVIVQSILRGLVNWYIANNTYTPNTPNNTTTISELDIIKILDKYEDMYRVSKEKECGICYEVVYSKRLENDRYFGLLDSCNHIFCITCINIWHRTRRETGALDNCPICRTRFRKITMSKFYKLVN.

The KilA-N domain occupies Y21–W131. Residues C173–R226 form an RING-type zinc finger.

The protein belongs to the orthopoxvirus OPG021 family.

It localises to the host cytoplasm. The catalysed reaction is S-ubiquitinyl-[E2 ubiquitin-conjugating enzyme]-L-cysteine + [acceptor protein]-L-lysine = [E2 ubiquitin-conjugating enzyme]-L-cysteine + N(6)-ubiquitinyl-[acceptor protein]-L-lysine.. Its function is as follows. RING-finger E3 ubiquitin ligase which catalyzes the formation of both 'Lys-48'- and 'Lys-63'-linked polyubiquitin chains. Plays an important role in virulence by acting as an anti-apoptotic factor. The sequence is that of Host range factor p28 (OPG021) from Cynomys gunnisoni (Gunnison's prairie dog).